A 61-amino-acid polypeptide reads, in one-letter code: Large ribosomal subunit protein eL20 (61 aa).

This sequence belongs to the eukaryotic ribosomal protein eL20 family. As to quaternary structure, part of the 50S ribosomal subunit. Binds 23S rRNA.

This is Large ribosomal subunit protein eL20 from Methanosarcina mazei (strain ATCC BAA-159 / DSM 3647 / Goe1 / Go1 / JCM 11833 / OCM 88) (Methanosarcina frisia).